The chain runs to 173 residues: Superoxide dismutase [Cu-Zn] (173 aa).

Residues 1–19 form the signal peptide; the sequence is MKSLFIASTMVLMAFPAFA. His-67, His-69, and His-92 together coordinate Cu cation. An intrachain disulfide couples Cys-74 to Cys-169. Zn(2+) contacts are provided by His-92, His-101, His-109, and Asp-112. A Cu cation-binding site is contributed by His-147.

It belongs to the Cu-Zn superoxide dismutase family. In terms of assembly, homodimer. Requires Cu cation as cofactor. It depends on Zn(2+) as a cofactor.

It localises to the periplasm. It carries out the reaction 2 superoxide + 2 H(+) = H2O2 + O2. In terms of biological role, destroys radicals which are normally produced within the cells and which are toxic to biological systems. The chain is Superoxide dismutase [Cu-Zn] (sodC) from Brucella abortus biovar 1 (strain 9-941).